We begin with the raw amino-acid sequence, 769 residues long: Integrin beta-2 (769 aa).

The first 22 residues, Met1–Ser22, serve as a signal peptide directing secretion. Gln23 is modified (pyrrolidone carboxylic acid). Residues Gln23–Asn700 lie on the Extracellular side of the membrane. Residues Glu24 to Pro74 form the PSI domain. 28 cysteine pairs are disulfide-bonded: Cys25–Cys43, Cys33–Cys447, Cys36–Cys62, Cys46–Cys73, Cys191–Cys198, Cys246–Cys286, Cys386–Cys400, Cys420–Cys445, Cys449–Cys467, Cys459–Cys470, Cys472–Cys481, Cys483–Cys514, Cys497–Cys512, Cys506–Cys517, Cys519–Cys534, Cys536–Cys559, Cys541–Cys557, Cys549–Cys562, Cys564–Cys573, Cys575–Cys598, Cys582–Cys596, Cys590–Cys601, Cys603–Cys612, Cys615–Cys618, Cys622–Cys662, Cys628–Cys647, Cys631–Cys643, and Cys670–Cys695. 2 N-linked (GlcNAc...) asparagine glycosylation sites follow: Asn50 and Asn116. The region spanning Gly124–Leu363 is the VWFA domain. Mg(2+)-binding residues include Ser136 and Ser138. Ca(2+)-binding residues include Ser138, Asp141, Asp142, and Asp173. 4 residues coordinate Ca(2+): Asn229, Asp231, Pro233, and Glu234. Position 234 (Glu234) interacts with Mg(2+). Asn254 carries N-linked (GlcNAc...) asparagine glycosylation. Ca(2+) is bound by residues Asp264 and Glu347. The Cell attachment site motif lies at Arg397 to Asp399. I-EGF domains lie at Cys449–Glu482, Cys483–Glu535, Cys536–Gln574, and Cys575–Ser613. Asn501 carries an N-linked (GlcNAc...) asparagine glycan. Asn642 carries N-linked (GlcNAc...) asparagine glycosylation. Residues Ile701–Trp723 form a helical membrane-spanning segment. Residues Lys724–Ser769 lie on the Cytoplasmic side of the membrane. Residues Ser745 and Ser756 each carry the phosphoserine modification. A phosphothreonine mark is found at Thr758 and Thr760.

It belongs to the integrin beta chain family. Heterodimer of an alpha and a beta subunit. The ITGB2 beta subunit associates with the ITGAL, ITGAM, ITGAX or ITGAD alpha subunits. Found in a complex with CD177 and ITGAM/CD11b. Interacts with FGR. Interacts with COPS5 and RANBP9. Interacts with FLNA (via filamin repeats 4, 9, 12, 17, 19, 21, and 23). Interacts with THBD. Both Ser-745 and Ser-756 become phosphorylated when T-cells are exposed to phorbol esters. Phosphorylation on Thr-758 (but not on Ser-756) allows interaction with 14-3-3 proteins.

It is found in the cell membrane. The protein localises to the membrane raft. Integrin ITGAL/ITGB2 is a receptor for ICAM1, ICAM2, ICAM3 and ICAM4. Integrin ITGAL/ITGB2 is also a receptor for the secreted form of ubiquitin-like protein ISG15; the interaction is mediated by ITGAL. Integrins ITGAM/ITGB2 and ITGAX/ITGB2 are receptors for the iC3b fragment of the third complement component and for fibrinogen. Integrin ITGAX/ITGB2 recognizes the sequence G-P-R in fibrinogen alpha-chain. Integrin ITGAM/ITGB2 recognizes P1 and P2 peptides of fibrinogen gamma chain. Integrin ITGAM/ITGB2 is also a receptor for factor X. Integrin ITGAD/ITGB2 is a receptor for ICAM3 and VCAM1. Contributes to natural killer cell cytotoxicity. Involved in leukocyte adhesion and transmigration of leukocytes including T-cells and neutrophils. Triggers neutrophil transmigration during lung injury through PTK2B/PYK2-mediated activation. Integrin ITGAL/ITGB2 in association with ICAM3, contributes to apoptotic neutrophil phagocytosis by macrophages. The chain is Integrin beta-2 (ITGB2) from Bos taurus (Bovine).